The primary structure comprises 467 residues: Argininosuccinate lyase (467 aa).

It belongs to the lyase 1 family. Argininosuccinate lyase subfamily.

It localises to the cytoplasm. The catalysed reaction is 2-(N(omega)-L-arginino)succinate = fumarate + L-arginine. Its pathway is amino-acid biosynthesis; L-arginine biosynthesis; L-arginine from L-ornithine and carbamoyl phosphate: step 3/3. In Thioalkalivibrio sulfidiphilus (strain HL-EbGR7), this protein is Argininosuccinate lyase.